A 47-amino-acid polypeptide reads, in one-letter code: Photosystem II reaction center protein K (47 aa).

The propeptide occupies 1–10; that stretch reads MALINFDLLA. The helical transmembrane segment at 26–46 threads the bilayer; sequence LPLIPLFFFLLVFVWQAAVGF.

This sequence belongs to the PsbK family. In terms of assembly, PSII is composed of 1 copy each of membrane proteins PsbA, PsbB, PsbC, PsbD, PsbE, PsbF, PsbH, PsbI, PsbJ, PsbK, PsbL, PsbM, PsbT, PsbX, PsbY, Psb30/Ycf12, peripheral proteins PsbO, CyanoQ (PsbQ), PsbU, PsbV and a large number of cofactors. It forms dimeric complexes.

The protein localises to the cellular thylakoid membrane. Functionally, one of the components of the core complex of photosystem II (PSII). PSII is a light-driven water:plastoquinone oxidoreductase that uses light energy to abstract electrons from H(2)O, generating O(2) and a proton gradient subsequently used for ATP formation. It consists of a core antenna complex that captures photons, and an electron transfer chain that converts photonic excitation into a charge separation. In Prochlorococcus marinus (strain NATL1A), this protein is Photosystem II reaction center protein K.